The following is a 292-amino-acid chain: MLRIALPNKGRLSEDTRGLFNDAGLEVRSSGERALTASLGGEFEAIFVRAQDIPEFVADGAADAGVTGWDLVSESGRELTSHLDLGFGRCRLVVAAREDAGVRSLEDLARQAPPMRVATVFPNITRRFFEMAGVPVTVVPVSGAAEIAPHLGIADVVVDLTSTGSTLRVNGLREVETVLRSSAHLITAVAGPRNGDVSRKQEFDDLVTALASVIRARGQRYLMANVPREVLDAVRAVLPGLNGPTVIDIADHSRYVAVHAVVSADTIYRTISQLRALGGEGILVTRIERLIP.

Belongs to the ATP phosphoribosyltransferase family. Long subfamily. Mg(2+) is required as a cofactor.

Its subcellular location is the cytoplasm. It catalyses the reaction 1-(5-phospho-beta-D-ribosyl)-ATP + diphosphate = 5-phospho-alpha-D-ribose 1-diphosphate + ATP. It functions in the pathway amino-acid biosynthesis; L-histidine biosynthesis; L-histidine from 5-phospho-alpha-D-ribose 1-diphosphate: step 1/9. With respect to regulation, feedback inhibited by histidine. In terms of biological role, catalyzes the condensation of ATP and 5-phosphoribose 1-diphosphate to form N'-(5'-phosphoribosyl)-ATP (PR-ATP). Has a crucial role in the pathway because the rate of histidine biosynthesis seems to be controlled primarily by regulation of HisG enzymatic activity. In Gemmatimonas aurantiaca (strain DSM 14586 / JCM 11422 / NBRC 100505 / T-27), this protein is ATP phosphoribosyltransferase.